A 149-amino-acid chain; its full sequence is Histone H2A (149 aa).

A compositionally biased stretch (basic residues) spans 1–23 (METAGKAKKGFGGRKGGPRKKSV). Disordered regions lie at residues 1 to 25 (META…SVTR) and 127 to 149 (KTAE…PKKA). Over residues 127 to 138 (KTAEKAAKEPKS) the composition is skewed to basic and acidic residues. 2 short sequence motifs (SPKK motif) span residues 138-141 (SPSK) and 145-148 (SPKK).

Belongs to the histone H2A family. The nucleosome is a histone octamer containing two molecules each of H2A, H2B, H3 and H4 assembled in one H3-H4 heterotetramer and two H2A-H2B heterodimers. The octamer wraps approximately 147 bp of DNA.

Its subcellular location is the nucleus. It localises to the chromosome. In terms of biological role, core component of nucleosome. Nucleosomes wrap and compact DNA into chromatin, limiting DNA accessibility to the cellular machineries which require DNA as a template. Histones thereby play a central role in transcription regulation, DNA repair, DNA replication and chromosomal stability. DNA accessibility is regulated via a complex set of post-translational modifications of histones, also called histone code, and nucleosome remodeling. This Petroselinum crispum (Parsley) protein is Histone H2A.